Here is a 558-residue protein sequence, read N- to C-terminus: Kelch-like protein 23 (558 aa).

The BTB domain occupies 36–104; that stretch reads TDITLQCPSG…AYTSQIEITK (69 aa). The region spanning 139–240 is the BACK domain; sequence CIGMHSFAEF…DPVYLKTALG (102 aa). Kelch repeat units follow at residues 274–320, 321–369, 370–416, 418–466, 467–508, and 510–557; these read TMYI…CLGP, NIYV…TLGG, CVYA…VLHD, IYVI…PFEN, KLYL…IMNG, and IYVT…CVYN.

The protein is Kelch-like protein 23 (KLHL23) of Homo sapiens (Human).